The sequence spans 406 residues: Peptide chain release factor PrfB3, chloroplastic (406 aa).

The protein belongs to the prokaryotic/mitochondrial release factor family. Interacts with PDE338.

The protein resides in the plastid. It localises to the chloroplast stroma. The protein localises to the chloroplast. Involved in the light- and stress-dependent regulation of stability of 3' processed petB transcripts, thus regulating cytochrome b6 accumulation, a rate-limiting step in photosynthetic electron transport. May be recruited to specifically protect petB transcripts against 3'-5' exonucleolytic attack by masking the 3' ends. Does not function as release factor. This chain is Peptide chain release factor PrfB3, chloroplastic, found in Arabidopsis thaliana (Mouse-ear cress).